We begin with the raw amino-acid sequence, 303 residues long: Probable cell division protein WhiA (303 aa).

Residues serine 272 to leucine 303 constitute a DNA-binding region (H-T-H motif).

The protein belongs to the WhiA family.

Involved in cell division and chromosome segregation. The protein is Probable cell division protein WhiA of Streptococcus pyogenes serotype M12 (strain MGAS2096).